The following is a 751-amino-acid chain: Catalase-peroxidase (751 aa).

A disordered region spans residues 1-21 (MSNESKCPFHQTAGGGTTNRD). A cross-link (tryptophyl-tyrosyl-methioninium (Trp-Tyr) (with M-270)) is located at residues 90–244 (WHSAGTYRIG…LAAVQMGLIY (155 aa)). His91 acts as the Proton acceptor in catalysis. The segment at residues 244-270 (YVNPEGPEGNPDPVASGKDIRETFGRM) is a cross-link (tryptophyl-tyrosyl-methioninium (Tyr-Met) (with W-90)). His285 contributes to the heme b binding site. Residues 365-390 (AHQWRPKEGKGAGTVPDAHDPGKKHA) form a disordered region.

This sequence belongs to the peroxidase family. Peroxidase/catalase subfamily. Homodimer or homotetramer. It depends on heme b as a cofactor. Post-translationally, formation of the three residue Trp-Tyr-Met cross-link is important for the catalase, but not the peroxidase activity of the enzyme.

It carries out the reaction H2O2 + AH2 = A + 2 H2O. It catalyses the reaction 2 H2O2 = O2 + 2 H2O. In terms of biological role, bifunctional enzyme with both catalase and broad-spectrum peroxidase activity. This Pseudomonas putida (strain GB-1) protein is Catalase-peroxidase.